Reading from the N-terminus, the 216-residue chain is Thiamine-phosphate synthase (216 aa).

4-amino-2-methyl-5-(diphosphooxymethyl)pyrimidine is bound by residues 41–45 and aspartate 77; that span reads QLREK. Mg(2+)-binding residues include aspartate 78 and aspartate 97. Serine 116 contributes to the 4-amino-2-methyl-5-(diphosphooxymethyl)pyrimidine binding site. 143 to 145 lines the 2-[(2R,5Z)-2-carboxy-4-methylthiazol-5(2H)-ylidene]ethyl phosphate pocket; the sequence is TTS. Residue lysine 146 participates in 4-amino-2-methyl-5-(diphosphooxymethyl)pyrimidine binding. Residues glycine 174 and 194-195 contribute to the 2-[(2R,5Z)-2-carboxy-4-methylthiazol-5(2H)-ylidene]ethyl phosphate site; that span reads IS.

Belongs to the thiamine-phosphate synthase family. Mg(2+) serves as cofactor.

The catalysed reaction is 2-[(2R,5Z)-2-carboxy-4-methylthiazol-5(2H)-ylidene]ethyl phosphate + 4-amino-2-methyl-5-(diphosphooxymethyl)pyrimidine + 2 H(+) = thiamine phosphate + CO2 + diphosphate. It carries out the reaction 2-(2-carboxy-4-methylthiazol-5-yl)ethyl phosphate + 4-amino-2-methyl-5-(diphosphooxymethyl)pyrimidine + 2 H(+) = thiamine phosphate + CO2 + diphosphate. The enzyme catalyses 4-methyl-5-(2-phosphooxyethyl)-thiazole + 4-amino-2-methyl-5-(diphosphooxymethyl)pyrimidine + H(+) = thiamine phosphate + diphosphate. The protein operates within cofactor biosynthesis; thiamine diphosphate biosynthesis; thiamine phosphate from 4-amino-2-methyl-5-diphosphomethylpyrimidine and 4-methyl-5-(2-phosphoethyl)-thiazole: step 1/1. In terms of biological role, condenses 4-methyl-5-(beta-hydroxyethyl)thiazole monophosphate (THZ-P) and 2-methyl-4-amino-5-hydroxymethyl pyrimidine pyrophosphate (HMP-PP) to form thiamine monophosphate (TMP). This Pediococcus pentosaceus (strain ATCC 25745 / CCUG 21536 / LMG 10740 / 183-1w) protein is Thiamine-phosphate synthase.